The primary structure comprises 155 residues: Deoxyuridine 5'-triphosphate nucleotidohydrolase (155 aa).

Substrate contacts are provided by residues 75–77, Asn88, and 92–94; these read RSG and TVD.

The protein belongs to the dUTPase family. The cofactor is Mg(2+).

It carries out the reaction dUTP + H2O = dUMP + diphosphate + H(+). It participates in pyrimidine metabolism; dUMP biosynthesis; dUMP from dCTP (dUTP route): step 2/2. In terms of biological role, this enzyme is involved in nucleotide metabolism: it produces dUMP, the immediate precursor of thymidine nucleotides and it decreases the intracellular concentration of dUTP so that uracil cannot be incorporated into DNA. This is Deoxyuridine 5'-triphosphate nucleotidohydrolase from Caulobacter vibrioides (strain ATCC 19089 / CIP 103742 / CB 15) (Caulobacter crescentus).